A 435-amino-acid chain; its full sequence is E3 ubiquitin-protein ligase RING1 (435 aa).

An RING-type zinc finger spans residues 46 to 86; sequence CPICLDMLKKTMTTKECLHRFCSDCIVTALRSGNKECPTCR. The tract at residues 144–322 is disordered; that stretch reads KLQSQNRPQR…TEGEGNGELG (179 aa). Gly residues predominate over residues 157–170; it reads KGGGGGGGGGGNGN. 4 stretches are compositionally biased toward low complexity: residues 171–188, 202–211, 222–251, and 259–278; these read GAAN…TAVG, SNDSNSNTNS, SGTS…TSAT, and SNPP…SSSS. Ser202 is subject to Phosphoserine. Ser266 carries the phosphoserine modification. Residue Thr267 is modified to Phosphothreonine. Ser269 carries the phosphoserine modification. A compositionally biased stretch (acidic residues) spans 309 to 322; sequence SNIDTEGEGNGELG.

As to quaternary structure, interacts with ORD. Component of PRC1 complex, which contains many PcG proteins like Pc, ph, Scm, Psc, Sce and also chromatin remodeling proteins such as histone deacetylases. This complex is distinct from the Esc/E(z) complex, at least composed of esc, E(z), Su(z)12, HDAC1/Rpd3 and Caf1-55. The two complexes however cooperate and interact together during the first 3 hours of development to establish PcG silencing. Ubiquitously expressed in syncytial blastoderm embryos. Ubiquitously expressed until stage 11. Then, it is only expressed in the neuroectoderm. Later in embryonic development, it is only expressed in the CNS. In larvae, it is expressed in all imaginal disks. Expressed in the male and female gonads.

It localises to the nucleus. The protein resides in the chromosome. The catalysed reaction is S-ubiquitinyl-[E2 ubiquitin-conjugating enzyme]-L-cysteine + [acceptor protein]-L-lysine = [E2 ubiquitin-conjugating enzyme]-L-cysteine + N(6)-ubiquitinyl-[acceptor protein]-L-lysine.. It functions in the pathway protein modification; protein ubiquitination. Its function is as follows. E3 ubiquitin-protein ligase that mediates monoubiquitination of 'Lys-118' of histone H2A, thereby playing a central role in histone code and gene regulation. H2A 'Lys-118' ubiquitination gives a specific tag for epigenetic transcriptional repression. Polycomb group (PcG) protein. PcG proteins act by forming multiprotein complexes, which are required to maintain the transcriptionally repressive state of homeotic genes throughout development. PcG proteins are not required to initiate repression, but to maintain it during later stages of development. PcG complexes act via modification of histones, such as methylation, deacetylation, ubiquitination rendering chromatin heritably changed in its expressibility. May play a role in meiotic sister chromatid cohesion. This Drosophila melanogaster (Fruit fly) protein is E3 ubiquitin-protein ligase RING1 (Sce).